A 147-amino-acid polypeptide reads, in one-letter code: Plasminogen receptor (KT) (147 aa).

Topologically, residues 1–52 are extracellular; the sequence is MGFIFSKSMNENMKNQQEFMVMHARLQLERQLIMQNEMRERQMAMQIAWSRE. A helical transmembrane segment spans residues 53 to 73; it reads FLKYFGTFFGIATISLAAGAI. The Cytoplasmic portion of the chain corresponds to 74–78; that stretch reads KRKKP. Residues 79–99 form a helical membrane-spanning segment; the sequence is AFLIPIVPLSFIFTYQYDLGY. Residues 100 to 147 are Extracellular-facing; sequence GTLLQRMKSEAEDILETEKTKLELPKGLITFESLEKARREQSKFFSDK.

Interacts with PLAT. Interacts with PLAUR. Expressed in adrenal medulla (pheochromocytoma).

Its subcellular location is the cell membrane. Functionally, receptor for plasminogen. Regulates urokinase plasminogen activator-dependent and stimulates tissue-type plasminogen activator-dependent cell surface plasminogen activation. Proposed to be part of a local catecholaminergic cell plasminogen activation system that regulates neuroendocrine prohormone processing. Involved in regulation of inflammatory response; regulates monocyte chemotactic migration and matrix metalloproteinase activation, such as of MMP2 and MMP9. This is Plasminogen receptor (KT) (Plgrkt) from Rattus norvegicus (Rat).